The following is a 59-amino-acid chain: UPF0391 membrane protein lpl2443 (59 aa).

The next 2 membrane-spanning stretches (helical) occupy residues 5–25 (ALIFFIIAIIAAAFGFGGIAV) and 30–50 (IAKILFFLFLVMFVIFLIMGL).

It belongs to the UPF0391 family.

The protein resides in the cell membrane. This chain is UPF0391 membrane protein lpl2443, found in Legionella pneumophila (strain Lens).